The chain runs to 329 residues: Transmembrane protein I329L (329 aa).

Positions M1–E31 are cleaved as a signal peptide. N-linked (GlcNAc...) asparagine; by host glycans are attached at residues N32, N39, N44, N76, N82, and N101. Topologically, residues N32–P239 are extracellular. One copy of the LRR repeat lies at E112–K133. N185 and N219 each carry an N-linked (GlcNAc...) asparagine; by host glycan. Cysteines 195 and 237 form a disulfide. The chain crosses the membrane as a helical span at residues L240–L260. Residues R261 to K329 are Cytoplasmic-facing.

This sequence belongs to the asfivirus I329L family. In terms of processing, highly glycosylated.

It is found in the host endoplasmic reticulum membrane. The protein resides in the host Golgi apparatus membrane. Functionally, viral TLR3 homolog that probably prevents TLR3 dimerization and subsequent induction of IFN. Inhibits dsRNA-stimulated activation of NF-kB and IRF3. This Ornithodoros (relapsing fever ticks) protein is Transmembrane protein I329L.